The sequence spans 148 residues: 3-hydroxyacyl-[acyl-carrier-protein] dehydratase FabZ (148 aa).

The active site involves histidine 49.

Belongs to the thioester dehydratase family. FabZ subfamily.

Its subcellular location is the cytoplasm. The enzyme catalyses a (3R)-hydroxyacyl-[ACP] = a (2E)-enoyl-[ACP] + H2O. Its function is as follows. Involved in unsaturated fatty acids biosynthesis. Catalyzes the dehydration of short chain beta-hydroxyacyl-ACPs and long chain saturated and unsaturated beta-hydroxyacyl-ACPs. The chain is 3-hydroxyacyl-[acyl-carrier-protein] dehydratase FabZ from Ehrlichia canis (strain Jake).